The following is a 635-amino-acid chain: Putative adagio-like protein 2 (635 aa).

Acidic residues predominate over residues 1 to 25 (MEWDSDSEGSGDEEEEEEEEEEEGV). Residues 1–32 (MEWDSDSEGSGDEEEEEEEEEEEGVEVGGGGD) form a disordered region. The PAS domain occupies 44–123 (ALAIEGVLGA…TDIRRCLEEG (80 aa)). Cysteine 91 bears the S-4a-FMN cysteine mark. In terms of domain architecture, F-box spans 209-255 (SDLFLLSDEVLCQKILSRLSPRDIASVNSVCKRLYHLTRNDDLWRMV). 4 Kelch repeats span residues 371–421 (RLVL…TLDG), 423–474 (KLVV…VYDG), 476–530 (KILM…PPPR), and 542–594 (RILI…VVGG).

It belongs to the ADAGIO family. FMN binds covalently to cysteine after exposure to blue light and is reversed in the dark.

The protein localises to the nucleus. Its pathway is protein modification; protein ubiquitination. Functionally, component of an E3 ubiquitin ligase complex that plays a central role in blue light-dependent circadian cycles. Acts as a blue light photoreceptor, due to the presence of FMN, that mediates light-regulated protein degradation of critical clock components by targeting them to the proteasome complex. In Oryza sativa subsp. japonica (Rice), this protein is Putative adagio-like protein 2.